A 185-amino-acid chain; its full sequence is Ribosome-recycling factor (185 aa).

The protein belongs to the RRF family.

It is found in the cytoplasm. Responsible for the release of ribosomes from messenger RNA at the termination of protein biosynthesis. May increase the efficiency of translation by recycling ribosomes from one round of translation to another. The protein is Ribosome-recycling factor of Geobacillus sp. (strain WCH70).